A 270-amino-acid polypeptide reads, in one-letter code: Tryptophan synthase alpha chain (270 aa).

Active-site proton acceptor residues include Glu-49 and Asp-60.

It belongs to the TrpA family. In terms of assembly, tetramer of two alpha and two beta chains.

The catalysed reaction is (1S,2R)-1-C-(indol-3-yl)glycerol 3-phosphate + L-serine = D-glyceraldehyde 3-phosphate + L-tryptophan + H2O. It participates in amino-acid biosynthesis; L-tryptophan biosynthesis; L-tryptophan from chorismate: step 5/5. Functionally, the alpha subunit is responsible for the aldol cleavage of indoleglycerol phosphate to indole and glyceraldehyde 3-phosphate. This chain is Tryptophan synthase alpha chain, found in Pseudomonas syringae pv. tomato (strain ATCC BAA-871 / DC3000).